A 158-amino-acid chain; its full sequence is Fluoride-specific ion channel FluC 2 (158 aa).

4 helical membrane passes run 25 to 45 (AWHG…IGGT), 63 to 83 (WTTF…MVVI), 95 to 115 (PFFG…AVDI), and 126 to 146 (TALA…RLAA). Residues Gly103 and Thr106 each contribute to the Na(+) site.

This sequence belongs to the fluoride channel Fluc/FEX (TC 1.A.43) family.

It localises to the cell membrane. It catalyses the reaction fluoride(in) = fluoride(out). Na(+) is not transported, but it plays an essential structural role and its presence is essential for fluoride channel function. Its function is as follows. Fluoride-specific ion channel. Important for reducing fluoride concentration in the cell, thus reducing its toxicity. The chain is Fluoride-specific ion channel FluC 2 from Streptomyces avermitilis (strain ATCC 31267 / DSM 46492 / JCM 5070 / NBRC 14893 / NCIMB 12804 / NRRL 8165 / MA-4680).